Here is a 113-residue protein sequence, read N- to C-terminus: Retrotransposon Gag-like protein 8A (113 aa).

Belongs to the FAM127 family.

This is Retrotransposon Gag-like protein 8A from Homo sapiens (Human).